We begin with the raw amino-acid sequence, 210 residues long: ATP-dependent Clp protease proteolytic subunit 1 (210 aa).

S106 (nucleophile) is an active-site residue. H131 is an active-site residue.

The protein belongs to the peptidase S14 family. In terms of assembly, fourteen ClpP subunits assemble into 2 heptameric rings which stack back to back to give a disk-like structure with a central cavity, resembling the structure of eukaryotic proteasomes.

It is found in the cytoplasm. The catalysed reaction is Hydrolysis of proteins to small peptides in the presence of ATP and magnesium. alpha-casein is the usual test substrate. In the absence of ATP, only oligopeptides shorter than five residues are hydrolyzed (such as succinyl-Leu-Tyr-|-NHMec, and Leu-Tyr-Leu-|-Tyr-Trp, in which cleavage of the -Tyr-|-Leu- and -Tyr-|-Trp bonds also occurs).. Its function is as follows. Cleaves peptides in various proteins in a process that requires ATP hydrolysis. Has a chymotrypsin-like activity. Plays a major role in the degradation of misfolded proteins. In Chelativorans sp. (strain BNC1), this protein is ATP-dependent Clp protease proteolytic subunit 1.